A 216-amino-acid polypeptide reads, in one-letter code: Elongation factor 1-beta (216 aa).

The protein belongs to the EF-1-beta/EF-1-delta family. As to quaternary structure, EF-1 is composed of 4 subunits: alpha, beta, delta, and gamma. Interacts with actin.

The protein localises to the cytoplasm. Its function is as follows. EF-1-beta and EF-1-delta stimulate the exchange of GDP bound to EF-1-alpha to GTP. The protein is Elongation factor 1-beta (efa1B) of Dictyostelium discoideum (Social amoeba).